We begin with the raw amino-acid sequence, 130 residues long: Small ribosomal subunit protein uS8A (130 aa).

This sequence belongs to the universal ribosomal protein uS8 family.

The sequence is that of Small ribosomal subunit protein uS8A (RpS15Aa) from Drosophila melanogaster (Fruit fly).